The sequence spans 1228 residues: ABC transporter B family member 16 (1228 aa).

6 helical membrane passes run 22 to 42 (MGLG…LFFI), 69 to 89 (LAML…GYCW), 145 to 167 (LPNI…MLLW), 171 to 193 (IVGF…ALIG), 251 to 271 (GIAI…TWYG), and 283 to 303 (GTVS…GQAL). Residues 22 to 311 (MGLGLIGAVG…ALSNLKYFSE (290 aa)) enclose the ABC transmembrane type-1 1 domain. Positions 346 to 582 (VEFNNVKCKY…DGKYTSLVRL (237 aa)) constitute an ABC transporter 1 domain. 381–388 (GGSGSGKS) contacts ATP. N-linked (GlcNAc...) asparagine glycans are attached at residues Asn-529, Asn-593, and Asn-628. An ABC transmembrane type-1 2 domain is found at 658–946 (ALCGCLSASL…AGTMTTDLAK (289 aa)). A run of 2 helical transmembrane segments spans residues 667-687 (LGGA…SVFF) and 700-720 (IYVL…ISQQ). N-linked (GlcNAc...) asparagine glycosylation occurs at Asn-755. 2 helical membrane passes run 781-801 (LLVQ…VIAW) and 805-825 (IVMI…RVLL). Residue Asn-827 is glycosylated (N-linked (GlcNAc...) asparagine). The next 2 helical transmembrane spans lie at 881 to 901 (SWLA…TSAL) and 920 to 940 (FFEL…AGTM). The 239-residue stretch at 981–1219 (ITFLNVDFAY…GPTGSYFSLV (239 aa)) folds into the ABC transporter 2 domain. N-linked (GlcNAc...) asparagine glycosylation is present at Asn-1001. 1016-1023 (GPSRSGKS) contacts ATP.

Belongs to the ABC transporter superfamily. ABCB family. Multidrug resistance exporter (TC 3.A.1.201) subfamily.

The protein resides in the membrane. This chain is ABC transporter B family member 16 (ABCB16), found in Arabidopsis thaliana (Mouse-ear cress).